Reading from the N-terminus, the 224-residue chain is Ribonuclease 3 (224 aa).

The RNase III domain occupies 4-127 (IEKLEQSLTY…IIGAIHLEAG (124 aa)). E40 serves as a coordination point for Mg(2+). Residue D44 is part of the active site. 2 residues coordinate Mg(2+): D113 and E116. The active site involves E116. Residues 154–223 (DYKTKLQEIT…AKIALEKLGA (70 aa)) form the DRBM domain.

It belongs to the ribonuclease III family. Homodimer. Mg(2+) is required as a cofactor.

The protein resides in the cytoplasm. It carries out the reaction Endonucleolytic cleavage to 5'-phosphomonoester.. Digests double-stranded RNA. Involved in the processing of primary rRNA transcript to yield the immediate precursors to the large and small rRNAs (23S and 16S). Processes some mRNAs, and tRNAs when they are encoded in the rRNA operon. Processes pre-crRNA and tracrRNA of type II CRISPR loci if present in the organism. This Campylobacter jejuni subsp. jejuni serotype O:6 (strain 81116 / NCTC 11828) protein is Ribonuclease 3.